The primary structure comprises 78 residues: UPF0612 protein new22 (78 aa).

This sequence belongs to the UPF0612 family.

The chain is UPF0612 protein new22 (new22) from Schizosaccharomyces pombe (strain 972 / ATCC 24843) (Fission yeast).